The following is a 439-amino-acid chain: Secreted aspartic protease LUC8 (439 aa).

A signal peptide spans 1–20 (MMHAFHHLAVLLIGSLPASA). N-linked (GlcNAc...) asparagine glycans are attached at residues Asn-33 and Asn-54. The Peptidase A1 domain maps to 51–435 (YLFNITVGTP…DFETQSFGLA (385 aa)). Residue Asp-69 is part of the active site. 4 N-linked (GlcNAc...) asparagine glycosylation sites follow: Asn-110, Asn-126, Asn-179, and Asn-289. The active site involves Asp-300. N-linked (GlcNAc...) asparagine glycosylation is found at Asn-329 and Asn-373. A disulfide bridge connects residues Cys-355 and Cys-391.

Belongs to the peptidase A1 family.

It localises to the secreted. Its function is as follows. Secreted aspartic protease; part of the gene cluster that mediates the biosynthesis of the mycotoxin lucilactaene and the lucilactaene-related compound NG-391 that act as cell cycle inhibitors with potent growth inhibitory activity against malarial parasites, moderate growth inhibitory activity against cancer cells, and no activity against bacteria and fungi. Within the cluster, LUC7 and LUC8 encode proteins which are not commonly involved in the biosynthesis of secondary metabolites and are not essential for lucilactaene biosynthesis. The polypeptide is Secreted aspartic protease LUC8 (Fusarium sp).